The primary structure comprises 103 residues: Large ribosomal subunit protein uL24 (103 aa).

It belongs to the universal ribosomal protein uL24 family. Part of the 50S ribosomal subunit.

In terms of biological role, one of two assembly initiator proteins, it binds directly to the 5'-end of the 23S rRNA, where it nucleates assembly of the 50S subunit. Functionally, one of the proteins that surrounds the polypeptide exit tunnel on the outside of the subunit. The chain is Large ribosomal subunit protein uL24 from Bacillus mycoides (strain KBAB4) (Bacillus weihenstephanensis).